Reading from the N-terminus, the 303-residue chain is Putative HTH-type transcriptional regulatory protein Mpal_0031 (303 aa).

In terms of domain architecture, HTH cro/C1-type spans Leu132–Leu189. The H-T-H motif DNA-binding region spans Leu143 to Ser162.

This chain is Putative HTH-type transcriptional regulatory protein Mpal_0031, found in Methanosphaerula palustris (strain ATCC BAA-1556 / DSM 19958 / E1-9c).